We begin with the raw amino-acid sequence, 449 residues long: Glucose-6-phosphate isomerase (449 aa).

E291 (proton donor) is an active-site residue. Residues H312 and K426 contribute to the active site.

This sequence belongs to the GPI family.

The protein resides in the cytoplasm. It catalyses the reaction alpha-D-glucose 6-phosphate = beta-D-fructose 6-phosphate. It functions in the pathway carbohydrate biosynthesis; gluconeogenesis. The protein operates within carbohydrate degradation; glycolysis; D-glyceraldehyde 3-phosphate and glycerone phosphate from D-glucose: step 2/4. Catalyzes the reversible isomerization of glucose-6-phosphate to fructose-6-phosphate. The protein is Glucose-6-phosphate isomerase of Streptococcus thermophilus (strain CNRZ 1066).